The primary structure comprises 331 residues: Tetraacyldisaccharide 4'-kinase (331 aa).

An ATP-binding site is contributed by 60 to 67 (TIGGTGKT).

The protein belongs to the LpxK family.

The enzyme catalyses a lipid A disaccharide + ATP = a lipid IVA + ADP + H(+). The protein operates within glycolipid biosynthesis; lipid IV(A) biosynthesis; lipid IV(A) from (3R)-3-hydroxytetradecanoyl-[acyl-carrier-protein] and UDP-N-acetyl-alpha-D-glucosamine: step 6/6. In terms of biological role, transfers the gamma-phosphate of ATP to the 4'-position of a tetraacyldisaccharide 1-phosphate intermediate (termed DS-1-P) to form tetraacyldisaccharide 1,4'-bis-phosphate (lipid IVA). This chain is Tetraacyldisaccharide 4'-kinase, found in Pseudomonas syringae pv. tomato (strain ATCC BAA-871 / DC3000).